A 94-amino-acid polypeptide reads, in one-letter code: Integration host factor subunit beta (94 aa).

It belongs to the bacterial histone-like protein family. As to quaternary structure, heterodimer of an alpha and a beta chain.

This protein is one of the two subunits of integration host factor, a specific DNA-binding protein that functions in genetic recombination as well as in transcriptional and translational control. This is Integration host factor subunit beta from Azoarcus sp. (strain BH72).